The following is a 41-amino-acid chain: Ranatuerin-2PLg (41 aa).

Positions 1–11 are excised as a propeptide; sequence DDGVEMTEEEV. Cys36 and Cys41 form a disulfide bridge.

It belongs to the frog skin active peptide (FSAP) family. Ranatuerin subfamily.

The protein resides in the secreted. Antimicrobial peptide. The protein is Ranatuerin-2PLg of Lithobates palustris (Pickerel frog).